The following is a 226-amino-acid chain: MADPGPDPESESESVFPREVGLFADSYSEKSQFCFCGHVLTITQNFGSRLGVAARVWDAALSLCNYFESQNVDFRGKKVIELGAGTGIVGILAALQGGDVTITDLPLALEQIQGNVQANVPAGGQAQVRALSWGIDHHVFPANYDLVLGADIVYLEPTFPLLLGTLQHLCRPHGTIYLASKMRKEHGTESFFQHLLPQHFQLELAQRDEDENVNIYRARHREPRPA.

Residues Trp-57, 83–85 (GAG), Asp-104, Trp-133, and Ala-150 contribute to the S-adenosyl-L-methionine site.

This sequence belongs to the methyltransferase superfamily. METTL21 family. As to quaternary structure, interacts with members of the heat shock protein 70 and 90 families and of the TCP-1 chaperonin family, as well as with HSPD1, STIP1 and tubulin; at least some of these proteins may be methylation substrates.

The protein resides in the cytoplasm. It is found in the cytoskeleton. It localises to the microtubule organizing center. The protein localises to the centrosome. It catalyses the reaction L-lysyl-[protein] + 3 S-adenosyl-L-methionine = N(6),N(6),N(6)-trimethyl-L-lysyl-[protein] + 3 S-adenosyl-L-homocysteine + 3 H(+). The enzyme catalyses L-lysyl-[protein] + S-adenosyl-L-methionine = N(6)-methyl-L-lysyl-[protein] + S-adenosyl-L-homocysteine + H(+). It carries out the reaction N(6)-methyl-L-lysyl-[protein] + S-adenosyl-L-methionine = N(6),N(6)-dimethyl-L-lysyl-[protein] + S-adenosyl-L-homocysteine + H(+). The catalysed reaction is N(6),N(6)-dimethyl-L-lysyl-[protein] + S-adenosyl-L-methionine = N(6),N(6),N(6)-trimethyl-L-lysyl-[protein] + S-adenosyl-L-homocysteine + H(+). Its function is as follows. Protein-lysine methyltransferase that selectively mono-, di- and trimethylates 'Lys-165' of the translation elongation factors EEF1A1 and EEF1A2 in an aminoacyl-tRNA and GTP-dependent manner. EEF1A1 methylation by EEF1AKMT3 is dynamic as well as inducible by stress conditions, such as ER-stress, and plays a regulatory role on mRNA translation. The protein is EEF1A lysine methyltransferase 3 of Homo sapiens (Human).